The sequence spans 235 residues: RNA-free ribonuclease P (235 aa).

The protein belongs to the HARP family.

The enzyme catalyses Endonucleolytic cleavage of RNA, removing 5'-extranucleotides from tRNA precursor.. In terms of biological role, RNA-free RNase P that catalyzes the removal of the 5'-leader sequence from pre-tRNA to produce the mature 5'-terminus. The sequence is that of RNA-free ribonuclease P from Methanothrix thermoacetophila (strain DSM 6194 / JCM 14653 / NBRC 101360 / PT) (Methanosaeta thermophila).